Consider the following 177-residue polypeptide: MRLHSAITLRNLFTRKSLRIPQNLSITASPLLIGDVSGQIKPSSTSHYSKSSLSEASSSSSSSLIFQIPNNASFFLENQRRYSTGSSSGSPPDVNKVVDEINLKFAEAREEIEMAMDAKETVYFNEEAECARDAVAEVLEMFQGLLGKVTEKEKASLQRSMGLKIEQLKAELEQLNE.

Residues 98–118 (VDEINLKFAEAREEIEMAMDA) are a coiled coil.

In terms of assembly, interacts with HAG1/GCN5. Expressed in flowers, leaves, stems and siliques.

It localises to the nucleus. Functionally, activates gene expression by recruiting HAG1/GCN5 and triggering subsequent histone H3 acetylation of target genes promoters. In Arabidopsis thaliana (Mouse-ear cress), this protein is Embryogenesis-like protein.